A 589-amino-acid chain; its full sequence is Glucose starvation modulator protein 1 (589 aa).

Residues 20–48 (CVFCHQKHLQCSNERPCKNCVKRNIGHEC) constitute a DNA-binding region (zn(2)-C6 fungal-type). 3 disordered regions span residues 59–90 (LTGNGKGSSSKTKTPRKKLKSTPITASSPSVA), 218–240 (NNSNNTSHNDNFIAQNNNNNPEP), and 340–362 (ANGQTEDLLDHNKDDSRKNPGNG). A compositionally biased stretch (polar residues) spans 80–90 (TPITASSPSVA). Residues 347 to 357 (LLDHNKDDSRK) are compositionally biased toward basic and acidic residues. The PAS domain maps to 471-542 (SLLDYKKLVE…FKFFKNIAVN (72 aa)).

This sequence belongs to the ERT1/acuK family.

It localises to the nucleus. Transcription factor which regulates nonfermentable carbon utilization. The protein is Glucose starvation modulator protein 1 (GSM1) of Candida tropicalis (strain ATCC MYA-3404 / T1) (Yeast).